We begin with the raw amino-acid sequence, 126 residues long: BPTI/Kunitz domain-containing protein (126 aa).

BPTI/Kunitz inhibitor domains follow at residues 14–64 (CQLP…RRRC) and 70–120 (CSLP…RFQC). 6 disulfides stabilise this stretch: Cys14–Cys64, Cys23–Cys47, Cys39–Cys60, Cys70–Cys120, Cys79–Cys103, and Cys95–Cys116.

In terms of tissue distribution, component of the acid-soluble and acid-insoluble organic matrix of calcified shell layers (at protein level).

The protein localises to the secreted. Functionally, serine protease inhibitor. This is BPTI/Kunitz domain-containing protein from Haliotis asinina (Donkey's ear abalone).